Here is a 713-residue protein sequence, read N- to C-terminus: MASQGSVTAALRVAEVLESIANRCVGPEGGQVLCTKPTGEVLLSRDGGCLLEALHLEHPLARMIVACVSSHLKKTGDGAKTFIIFLCHLLRGLHAIGEKGKDSFTSENIQSHERHWKNCCQWKSISQALQTFQTQTLGCIVDRSLSRHYLSVFSSSTEGRKLCRHSLELLLEAYFCGRVGRNNHRFISQLMCDYVFKCMACESGVEVFELLDHCFAELNVGVTGLPVSDSRIIDGLVLPRDFSMYCPADGDIRMVIVTEILQPQFSSAGSEFVLNSETQFQASQCWITDRTKTVMNHLRGQNVKLLLTSVKQPDLVIYCARLNSISVVECLSAEEVSLVQRITGLSPCVLPEVASQCEISDSTLVKFCKPLILRSKRYVHLGLISTCAFIPHSMVLCGPVLGLVEQHERAFHGAFKMLRQLFTDLDLNYIIQTKQQCNPSPLAYDNSRERNHSPETDKYQDIVAKSKNKLETQTHLEVYSGLGASDTELRAGKPWSAHKKTPIAPSQTDEMLKCLPPERSGIIDNCDLSIENHSTGNPTAEDTGTEISFEHLQVSDNAGKGYTLPVMRKSLDTCTCQGYCSSTVPAGCVLPVGGSFEILMSYYLLSYAKQCRQSDETVISMLIADALLGIPKILYKPKKGKDSFPHIYMRSLHALQASQPMVSGQSGFESVAGKYQLLTSVLQCLMKILTIDLIINIKRQPQKTADQESEDEF.

The protein belongs to the TCP-1 chaperonin family. Component of a complex composed at least of MKKS, BBS10, BBS12, TCP1, CCT2, CCT3, CCT4, CCT5 and CCT8.

The protein localises to the cell projection. It is found in the cilium. Probable molecular chaperone that assists the folding of proteins upon ATP hydrolysis. Plays a role in the assembly of BBSome, a complex involved in ciliogenesis regulating transports vesicles to the cilia. Involved in adipogenic differentiation. This is BBSome complex assembly protein BBS10 (Bbs10) from Mus musculus (Mouse).